Reading from the N-terminus, the 446-residue chain is UDP-N-acetylmuramoylalanine--D-glutamate ligase (446 aa).

Glycine 112–threonine 118 provides a ligand contact to ATP.

It belongs to the MurCDEF family.

It localises to the cytoplasm. It catalyses the reaction UDP-N-acetyl-alpha-D-muramoyl-L-alanine + D-glutamate + ATP = UDP-N-acetyl-alpha-D-muramoyl-L-alanyl-D-glutamate + ADP + phosphate + H(+). It functions in the pathway cell wall biogenesis; peptidoglycan biosynthesis. Cell wall formation. Catalyzes the addition of glutamate to the nucleotide precursor UDP-N-acetylmuramoyl-L-alanine (UMA). This chain is UDP-N-acetylmuramoylalanine--D-glutamate ligase, found in Baumannia cicadellinicola subsp. Homalodisca coagulata.